Consider the following 496-residue polypeptide: Probable malate:quinone oxidoreductase (496 aa).

This sequence belongs to the MQO family. Requires FAD as cofactor.

It catalyses the reaction (S)-malate + a quinone = a quinol + oxaloacetate. The protein operates within carbohydrate metabolism; tricarboxylic acid cycle; oxaloacetate from (S)-malate (quinone route): step 1/1. In Prochlorococcus marinus (strain MIT 9313), this protein is Probable malate:quinone oxidoreductase.